The chain runs to 207 residues: 3-isopropylmalate dehydratase small subunit (207 aa).

It belongs to the LeuD family. LeuD type 1 subfamily. In terms of assembly, heterodimer of LeuC and LeuD.

It catalyses the reaction (2R,3S)-3-isopropylmalate = (2S)-2-isopropylmalate. Its pathway is amino-acid biosynthesis; L-leucine biosynthesis; L-leucine from 3-methyl-2-oxobutanoate: step 2/4. Functionally, catalyzes the isomerization between 2-isopropylmalate and 3-isopropylmalate, via the formation of 2-isopropylmaleate. The chain is 3-isopropylmalate dehydratase small subunit from Acidithiobacillus ferrooxidans (strain ATCC 23270 / DSM 14882 / CIP 104768 / NCIMB 8455) (Ferrobacillus ferrooxidans (strain ATCC 23270)).